The primary structure comprises 205 residues: Imidazole glycerol phosphate synthase subunit HisH (205 aa).

One can recognise a Glutamine amidotransferase type-1 domain in the interval 1 to 205 (MVGIVNYNIG…RILKNFCEIG (205 aa)). Cysteine 79 (nucleophile) is an active-site residue. Active-site residues include histidine 186 and glutamate 188.

In terms of assembly, heterodimer of HisH and HisF.

The protein resides in the cytoplasm. The enzyme catalyses 5-[(5-phospho-1-deoxy-D-ribulos-1-ylimino)methylamino]-1-(5-phospho-beta-D-ribosyl)imidazole-4-carboxamide + L-glutamine = D-erythro-1-(imidazol-4-yl)glycerol 3-phosphate + 5-amino-1-(5-phospho-beta-D-ribosyl)imidazole-4-carboxamide + L-glutamate + H(+). It catalyses the reaction L-glutamine + H2O = L-glutamate + NH4(+). It participates in amino-acid biosynthesis; L-histidine biosynthesis; L-histidine from 5-phospho-alpha-D-ribose 1-diphosphate: step 5/9. IGPS catalyzes the conversion of PRFAR and glutamine to IGP, AICAR and glutamate. The HisH subunit catalyzes the hydrolysis of glutamine to glutamate and ammonia as part of the synthesis of IGP and AICAR. The resulting ammonia molecule is channeled to the active site of HisF. The protein is Imidazole glycerol phosphate synthase subunit HisH of Wolinella succinogenes (strain ATCC 29543 / DSM 1740 / CCUG 13145 / JCM 31913 / LMG 7466 / NCTC 11488 / FDC 602W) (Vibrio succinogenes).